The primary structure comprises 347 residues: Transcription elongation factor A protein 3 (347 aa).

One can recognise a TFIIS N-terminal domain in the interval 5–82 (EELLRIAKKL…KNWKRLLDSP (78 aa)). Over residues 83 to 100 (RTTKGEREEREKAKKEKG) the composition is skewed to basic and acidic residues. The interval 83-168 (RTTKGEREER…TTPSSPSTPT (86 aa)) is disordered. Ser113 bears the Phosphoserine mark. Basic and acidic residues predominate over residues 119–131 (GGGEPKTRRDSVD). Low complexity-rich tracts occupy residues 132–142 (SRSSTTSSPKR) and 157–168 (TPTTPSSPSTPT). Residue Ser139 is modified to Phosphoserine. Positions 186–302 (VRDKCVEMLS…EHQMAKTGGT (117 aa)) constitute a TFIIS central domain. Residues 305 to 345 (DLLRCSKCKKKNCTYNQVQTRSADEPMTTFVLCNECGNRWK) form a TFIIS-type zinc finger. 4 residues coordinate Zn(2+): Cys309, Cys312, Cys337, and Cys340.

It belongs to the TFS-II family. Liver, kidney and heart.

The protein resides in the nucleus. Necessary for efficient RNA polymerase II transcription elongation past template-encoded arresting sites. The arresting sites in DNA have the property of trapping a certain fraction of elongating RNA polymerases that pass through, resulting in locked ternary complexes. Cleavage of the nascent transcript by S-II allows the resumption of elongation from the new 3'-terminus. The sequence is that of Transcription elongation factor A protein 3 (Tcea3) from Mus musculus (Mouse).